The sequence spans 513 residues: ATP synthase subunit alpha 1 (513 aa).

Position 169-176 (169-176) interacts with ATP; it reads GDRQCGKT.

The protein belongs to the ATPase alpha/beta chains family. F-type ATPases have 2 components, CF(1) - the catalytic core - and CF(0) - the membrane proton channel. CF(1) has five subunits: alpha(3), beta(3), gamma(1), delta(1), epsilon(1). CF(0) has three main subunits: a(1), b(2) and c(9-12). The alpha and beta chains form an alternating ring which encloses part of the gamma chain. CF(1) is attached to CF(0) by a central stalk formed by the gamma and epsilon chains, while a peripheral stalk is formed by the delta and b chains.

Its subcellular location is the cell inner membrane. It carries out the reaction ATP + H2O + 4 H(+)(in) = ADP + phosphate + 5 H(+)(out). Produces ATP from ADP in the presence of a proton gradient across the membrane. The alpha chain is a regulatory subunit. The chain is ATP synthase subunit alpha 1 from Burkholderia thailandensis (strain ATCC 700388 / DSM 13276 / CCUG 48851 / CIP 106301 / E264).